The primary structure comprises 225 residues: UPF0758 protein Shewmr4_3597 (225 aa).

An MPN domain is found at 102–224; it reads VLTNPDLTRD…IVSFAERGWI (123 aa). Positions 173, 175, and 186 each coordinate Zn(2+). The JAMM motif signature appears at 173-186; it reads HNHPSGIAEPSQAD.

Belongs to the UPF0758 family.

The sequence is that of UPF0758 protein Shewmr4_3597 from Shewanella sp. (strain MR-4).